Consider the following 159-residue polypeptide: Biogenesis of lysosome-related organelles complex 1 subunit 2 (159 aa).

Residues 1-37 (MDKPTTSAAAAAAQDSNLLPDSPQHGPTLSSASSFEA) form a disordered region. The segment covering 14-36 (QDSNLLPDSPQHGPTLSSASSFE) has biased composition (polar residues). Residues 69–134 (EDYKLLEEMN…KLEAAAYKLD (66 aa)) adopt a coiled-coil conformation.

Belongs to the BLOC1S2 family. Homodimer. Component of the biogenesis of lysosome-related organelles complex-1 (BLOC-1) composed of Blos1, Blos2, Blos3, Blos4, Dysb, Muted, Pldn and Snapin. Interacts with Snapin.

Functionally, component of the biogenesis of lysosome-related organelles complex-1 (BLOC-1) involved in pigment granule biogenesis. In Drosophila melanogaster (Fruit fly), this protein is Biogenesis of lysosome-related organelles complex 1 subunit 2.